The sequence spans 371 residues: MRQILIAPDSFKGTLSAGEVCQIALDVLAPEFDCVAHPLADGGEGTLEAIANNLDGQWQTVRVQGPLPDQTVDACYLWLPQEETAVIEMARASGLPLVPVGEHNPEIATSYGTGELITHAARRGAKQIQLAIGGSATNDAGLGLLMALGWQFLDSQGQSVGWGGQALGKVAEIIPPVLNAFPQVTVLCDVTNPFYGANGAAQVYAPQKGADPAMVQRLDQGLRHFARVVREFDGFEINFPRAGAAGGMGGGVAWALETKIESGFTAIAKLTQLEQAMAGCDLVITGEGCFDHQSPQGKVVGGVLELAKKINKPAIIVAGQCQLSQTVLPNVLKIFSLVGPDMPLEKALQHPQTALKKRLVQVKQYLIQSQN.

The protein belongs to the glycerate kinase type-1 family.

This is an uncharacterized protein from Synechocystis sp. (strain ATCC 27184 / PCC 6803 / Kazusa).